A 487-amino-acid polypeptide reads, in one-letter code: GTPase Der (487 aa).

EngA-type G domains are found at residues 3 to 166 and 193 to 366; these read PVIA…PRDA and IKIA…QSAV. Residues 9–16, 56–60, 118–121, 199–206, 246–250, and 311–314 each bind GTP; these read GRPNVGKS, DTGGI, NKID, DTAGV, and NKWD. Residues 367-451 enclose the KH-like domain; that stretch reads TRWPTSRLTQ…PIRIEYKGGE (85 aa). Basic and acidic residues predominate over residues 448 to 461; the sequence is KGGENPYEGKKNTL. The disordered stretch occupies residues 448–487; the sequence is KGGENPYEGKKNTLTDRQVNKKRRLMSHHKKAEKKRRDKR. A compositionally biased stretch (basic residues) spans 467–487; it reads NKKRRLMSHHKKAEKKRRDKR.

The protein belongs to the TRAFAC class TrmE-Era-EngA-EngB-Septin-like GTPase superfamily. EngA (Der) GTPase family. As to quaternary structure, associates with the 50S ribosomal subunit.

In terms of biological role, GTPase that plays an essential role in the late steps of ribosome biogenesis. The sequence is that of GTPase Der from Pseudomonas putida (strain ATCC 47054 / DSM 6125 / CFBP 8728 / NCIMB 11950 / KT2440).